A 400-amino-acid chain; its full sequence is Exodeoxyribonuclease 7 large subunit (400 aa).

Belongs to the XseA family. In terms of assembly, heterooligomer composed of large and small subunits.

Its subcellular location is the cytoplasm. It carries out the reaction Exonucleolytic cleavage in either 5'- to 3'- or 3'- to 5'-direction to yield nucleoside 5'-phosphates.. Its function is as follows. Bidirectionally degrades single-stranded DNA into large acid-insoluble oligonucleotides, which are then degraded further into small acid-soluble oligonucleotides. The sequence is that of Exodeoxyribonuclease 7 large subunit from Clostridium perfringens (strain SM101 / Type A).